The sequence spans 278 residues: uncharacterized protein (278 aa).

An N-terminal signal peptide occupies residues 1-32; that stretch reads MSSASFTTKALSVLAALTAASAPLVAASPAHA. Residues 33 to 236 enclose the Peptidase S1 domain; sequence LANARNVTGS…HAEWIAYYTG (204 aa). C59 and C75 are disulfide-bonded. Active-site charge relay system residues include H74, D123, and S189.

The protein belongs to the peptidase S1 family.

The protein resides in the secreted. This is an uncharacterized protein from Corynebacterium glutamicum (strain R).